The following is a 102-amino-acid chain: Small ribosomal subunit protein uS10 (102 aa).

It belongs to the universal ribosomal protein uS10 family. As to quaternary structure, part of the 30S ribosomal subunit.

Functionally, involved in the binding of tRNA to the ribosomes. The polypeptide is Small ribosomal subunit protein uS10 (Parafrankia sp. (strain EAN1pec)).